Reading from the N-terminus, the 2382-residue chain is Serine/threonine-protein kinase WNK1 (2382 aa).

2 disordered regions span residues methionine 1 to arginine 81 and leucine 95 to aspartate 203. A phosphoserine mark is found at serine 15 and serine 19. The span at arginine 50–arginine 66 shows a compositional bias: basic and acidic residues. At threonine 60 the chain carries Phosphothreonine. Composition is skewed to low complexity over residues leucine 95–proline 108 and valine 125–proline 153. Serine 167 and serine 174 each carry phosphoserine. In terms of domain architecture, Protein kinase spans leucine 221–phenylalanine 479. Residue serine 231 participates in ATP binding. Residues phenylalanine 283 and leucine 299 each coordinate chloride. Residues threonine 301–methionine 304 and lysine 351 each bind ATP. The active-site Proton acceptor is the aspartate 368. 2 residues coordinate chloride: leucine 369 and leucine 371. A phosphoserine; by autocatalysis mark is found at serine 378 and serine 382. The interval glutamate 488–alanine 555 is autoinhibitory domain. A compositionally biased stretch (basic and acidic residues) spans glutamine 573–serine 588. 3 disordered regions span residues glutamine 573–alanine 779, glutamine 1018–glycine 1041, and valine 1053–lysine 1119. Polar residues predominate over residues alanine 598 to proline 614. Residues threonine 615 to threonine 625 show a composition bias toward low complexity. The tract at residues glutamate 628–glutamine 638 is interaction with KLHL3. The span at histidine 637 to threonine 689 shows a compositional bias: polar residues. The span at proline 709 to alanine 779 shows a compositional bias: low complexity. Residues glutamine 1025 to glycine 1041 show a composition bias toward polar residues. Positions valine 1053–serine 1077 are enriched in low complexity. The segment covering serine 1080–serine 1090 has biased composition (polar residues). Positions threonine 1098–lysine 1119 are enriched in basic residues. The RFXV motif 1 motif lies at arginine 1257–valine 1260. Serine 1261 bears the Phosphoserine mark. 2 stretches are compositionally biased toward low complexity: residues serine 1457 to proline 1467 and glutamine 1733 to valine 1745. Disordered stretches follow at residues serine 1457–serine 1476 and glutamine 1733–glutamine 1790. Threonine 1848 carries the phosphothreonine modification. An RFXV motif 2 motif is present at residues arginine 1859–valine 1862. Positions alanine 1866 to valine 1948 are disordered. Residues alanine 1869–histidine 1884 show a composition bias toward basic and acidic residues. Residues serine 1887 to valine 1905 are compositionally biased toward low complexity. Positions lysine 1927–proline 1940 are enriched in polar residues. 2 short sequence motifs (RFXV motif) span residues arginine 1945–valine 1948 and arginine 1957–valine 1960. Serine 1978, serine 2002, serine 2011, serine 2012, serine 2027, serine 2029, and serine 2032 each carry phosphoserine. Basic and acidic residues predominate over residues proline 1994 to glutamate 2003. 2 disordered regions span residues proline 1994–aspartate 2069 and leucine 2101–serine 2196. A compositionally biased stretch (low complexity) spans glutamine 2035 to aspartate 2062. The residue at position 2121 (serine 2121) is a Phosphoserine. Residues glycine 2122–lysine 2134 are compositionally biased toward basic residues. Low complexity predominate over residues serine 2135–serine 2145. Composition is skewed to polar residues over residues proline 2146–leucine 2167 and glutamate 2175–serine 2196. Positions serine 2241 to alanine 2261 are amphipathic alpha-helix. Phosphoserine occurs at positions 2270 and 2286. The segment at proline 2332–glutamine 2352 is disordered. Phosphoserine is present on residues serine 2370 and serine 2372.

Belongs to the protein kinase superfamily. Ser/Thr protein kinase family. WNK subfamily. In terms of assembly, interacts with WNK3. Interacts with WNK4; inhibiting the activity of WNK4. Interacts with SGK1; promoting its activation. Associates with the mTORC2 complex. Interacts with UVRAG. Interacts (via amphipathic alpha-helix region) with EMC2; promoting the ER membrane protein complex assembly. Interacts with isoform 1; inhibiting isoform 1 activity. Mg(2+) is required as a cofactor. Autophosphorylated at Ser-378 and Ser-382, promoting its activity. Autophosphorylation at Ser-382 is inhibited by intracellular calcium. Phosphorylation at Thr-60 increases ability to activate SGK1. In terms of processing, ubiquitinated by the BCR(KLHL3) complex, leading to its degradation. Also ubiquitinated by the BCR(KLHL2) complex. Post-translationally, may be O-glycosylated. As to expression, widely expressed, with highest levels observed in the testis, heart, kidney and skeletal muscle. Strong expression in dorsal root ganglia and spinal cord. In terms of tissue distribution, this isoform is kidney-specific and specifically expressed in the distal convoluted tubule (DCT) and connecting tubule (CNT) of the nephron.

It is found in the cytoplasm. The protein localises to the nucleus. The protein resides in the cytoskeleton. Its subcellular location is the spindle. The catalysed reaction is L-seryl-[protein] + ATP = O-phospho-L-seryl-[protein] + ADP + H(+). It catalyses the reaction L-threonyl-[protein] + ATP = O-phospho-L-threonyl-[protein] + ADP + H(+). Its activity is regulated as follows. Activated in response to hyperosmotic stress: cell shrinkage promotes formation of a membraneless compartment that concentrates WNK1 with its substrates, OXSR1/OSR1 and STK39/SPAK. Activation requires autophosphorylation of Ser-382 and, to a lower extent, Ser-378. Autophosphorylation and subsequent activation is inhibited by increases in intracellular ionic strength: Cl(-) potently inhibits WNK1 kinase activity via direct binding. Also inhibited by K(+) ions. Inhibited by small compounds staurosporine, tyrphostin 47, as well as Src tyrosine kinase inhibitors PP1 and PP2. Functionally, serine/threonine-protein kinase component of the WNK1-SPAK/OSR1 kinase cascade, which acts as a key regulator of blood pressure and regulatory volume increase by promoting ion influx. WNK1 mediates regulatory volume increase in response to hyperosmotic stress by acting as a molecular crowding sensor, which senses cell shrinkage and mediates formation of a membraneless compartment by undergoing liquid-liquid phase separation. The membraneless compartment concentrates WNK1 with its substrates, OXSR1/OSR1 and STK39/SPAK, promoting WNK1-dependent phosphorylation and activation of downstream kinases OXSR1/OSR1 and STK39/SPAK. Following activation, OXSR1/OSR1 and STK39/SPAK catalyze phosphorylation of ion cotransporters SLC12A1/NKCC2, SLC12A2/NKCC1, SLC12A5/KCC2 and SLC12A6/KCC3, regulating their activity. Phosphorylation of Na-K-Cl cotransporters SLC12A2/NKCC1 and SLC12A2/NKCC1 promote their activation and ion influx; simultaneously, phosphorylation of K-Cl cotransporters SLC12A5/KCC2 and SLC12A6/KCC3 inhibit their activity, blocking ion efflux. Also acts as a regulator of angiogenesis in endothelial cells via activation of OXSR1/OSR1 and STK39/SPAK: activation of OXSR1/OSR1 regulates chemotaxis and invasion, while STK39/SPAK regulates endothelial cell proliferation. Also acts independently of the WNK1-SPAK/OSR1 kinase cascade by catalyzing phosphorylation of other substrates, such as SYT2, PCF11 and NEDD4L. Mediates phosphorylation of SYT2, regulating SYT2 association with phospholipids and membrane-binding. Regulates mRNA export in the nucleus by mediating phosphorylation of PCF11, thereby decreasing the association between PCF11 and POLR2A/RNA polymerase II and promoting mRNA export to the cytoplasm. Acts as a negative regulator of autophagy. Required for the abscission step during mitosis, independently of the WNK1-SPAK/OSR1 kinase cascade. May also play a role in actin cytoskeletal reorganization. Also acts as a scaffold protein independently of its protein kinase activity: negatively regulates cell membrane localization of various transporters and channels, such as SLC4A4, SLC26A6, SLC26A9, TRPV4 and CFTR. Involved in the regulation of epithelial Na(+) channel (ENaC) by promoting activation of SGK1 in a kinase-independent manner: probably acts as a scaffold protein that promotes the recruitment of SGK1 to the mTORC2 complex in response to chloride, leading to mTORC2-dependent phosphorylation and activation of SGK1. Acts as an assembly factor for the ER membrane protein complex independently of its protein kinase activity: associates with EMC2 in the cytoplasm via its amphipathic alpha-helix, and prevents EMC2 ubiquitination and subsequent degradation, thereby promoting EMC2 stabilization. In terms of biological role, kinase-defective isoform specifically expressed in kidney, which acts as a dominant-negative regulator of the longer isoform 1. Does not directly inhibit WNK4 and has no direct effect on sodium and chloride ion transport. Down-regulates sodium-chloride cotransporter activity indirectly by inhibiting isoform 1, it associates with isoform 1 and attenuates its kinase activity. In kidney, may play an important role regulating sodium and potassium balance. This Homo sapiens (Human) protein is Serine/threonine-protein kinase WNK1.